The chain runs to 147 residues: 3-dehydroquinate dehydratase (147 aa).

Residue Y23 is the Proton acceptor of the active site. Substrate-binding residues include N75, H81, and D88. H101 serves as the catalytic Proton donor. Substrate contacts are provided by residues 102–103 (LS) and R112.

This sequence belongs to the type-II 3-dehydroquinase family. As to quaternary structure, homododecamer.

The catalysed reaction is 3-dehydroquinate = 3-dehydroshikimate + H2O. The protein operates within metabolic intermediate biosynthesis; chorismate biosynthesis; chorismate from D-erythrose 4-phosphate and phosphoenolpyruvate: step 3/7. Functionally, catalyzes a trans-dehydration via an enolate intermediate. This Thioalkalivibrio sulfidiphilus (strain HL-EbGR7) protein is 3-dehydroquinate dehydratase.